Here is a 229-residue protein sequence, read N- to C-terminus: Orotidine 5'-phosphate decarboxylase (229 aa).

Substrate-binding positions include D10, K32, 59–68 (DLKFHDIPNT), T119, R180, Q189, G209, and R210. The active-site Proton donor is K61.

It belongs to the OMP decarboxylase family. Type 1 subfamily. In terms of assembly, homodimer.

It catalyses the reaction orotidine 5'-phosphate + H(+) = UMP + CO2. It participates in pyrimidine metabolism; UMP biosynthesis via de novo pathway; UMP from orotate: step 2/2. Catalyzes the decarboxylation of orotidine 5'-monophosphate (OMP) to uridine 5'-monophosphate (UMP). The chain is Orotidine 5'-phosphate decarboxylase from Legionella pneumophila subsp. pneumophila (strain Philadelphia 1 / ATCC 33152 / DSM 7513).